Reading from the N-terminus, the 394-residue chain is Elongation factor Tu (394 aa).

The region spanning 10 to 204 (KPHINVGTIG…FLDTYIPEPK (195 aa)) is the tr-type G domain. The interval 19–26 (GHVDHGKT) is G1. GTP is bound at residue 19 to 26 (GHVDHGKT). Thr26 contributes to the Mg(2+) binding site. Residues 60–64 (GITIN) are G2. A G3 region spans residues 81 to 84 (DCPG). GTP contacts are provided by residues 81 to 85 (DCPGH) and 136 to 139 (NKCD). The tract at residues 136-139 (NKCD) is G4. The G5 stretch occupies residues 174–176 (SAL).

This sequence belongs to the TRAFAC class translation factor GTPase superfamily. Classic translation factor GTPase family. EF-Tu/EF-1A subfamily. As to quaternary structure, monomer.

It localises to the cytoplasm. The catalysed reaction is GTP + H2O = GDP + phosphate + H(+). Its function is as follows. GTP hydrolase that promotes the GTP-dependent binding of aminoacyl-tRNA to the A-site of ribosomes during protein biosynthesis. In Buchnera aphidicola subsp. Schizaphis graminum (strain Sg), this protein is Elongation factor Tu.